A 341-amino-acid chain; its full sequence is Phosphoribosylformylglycinamidine cyclo-ligase (341 aa).

Belongs to the AIR synthase family.

It localises to the cytoplasm. It catalyses the reaction 2-formamido-N(1)-(5-O-phospho-beta-D-ribosyl)acetamidine + ATP = 5-amino-1-(5-phospho-beta-D-ribosyl)imidazole + ADP + phosphate + H(+). It participates in purine metabolism; IMP biosynthesis via de novo pathway; 5-amino-1-(5-phospho-D-ribosyl)imidazole from N(2)-formyl-N(1)-(5-phospho-D-ribosyl)glycinamide: step 2/2. The protein is Phosphoribosylformylglycinamidine cyclo-ligase of Xanthomonas euvesicatoria pv. vesicatoria (strain 85-10) (Xanthomonas campestris pv. vesicatoria).